The following is a 523-amino-acid chain: Bifunctional purine biosynthesis protein PurH (523 aa).

An MGS-like domain is found at 1–149 (MSDPVIKRAL…KNNESVTVIT (149 aa)).

Belongs to the PurH family.

The enzyme catalyses (6R)-10-formyltetrahydrofolate + 5-amino-1-(5-phospho-beta-D-ribosyl)imidazole-4-carboxamide = 5-formamido-1-(5-phospho-D-ribosyl)imidazole-4-carboxamide + (6S)-5,6,7,8-tetrahydrofolate. It catalyses the reaction IMP + H2O = 5-formamido-1-(5-phospho-D-ribosyl)imidazole-4-carboxamide. Its pathway is purine metabolism; IMP biosynthesis via de novo pathway; 5-formamido-1-(5-phospho-D-ribosyl)imidazole-4-carboxamide from 5-amino-1-(5-phospho-D-ribosyl)imidazole-4-carboxamide (10-formyl THF route): step 1/1. The protein operates within purine metabolism; IMP biosynthesis via de novo pathway; IMP from 5-formamido-1-(5-phospho-D-ribosyl)imidazole-4-carboxamide: step 1/1. The sequence is that of Bifunctional purine biosynthesis protein PurH from Chlorobaculum parvum (strain DSM 263 / NCIMB 8327) (Chlorobium vibrioforme subsp. thiosulfatophilum).